Consider the following 225-residue polypeptide: Fibronectin type III domain-containing protein (225 aa).

An N-terminal signal peptide occupies residues 1–17; it reads MFSFGIILLTVVSFTNA. The Fibronectin type-III domain occupies 106–206; that stretch reads PPTNVIVEST…MPLNVKTPDI (101 aa).

As to expression, component of the organic matrix of calcified shell layers like nacre and prisms.

It is found in the secreted. This Mytilus californianus (California mussel) protein is Fibronectin type III domain-containing protein.